Here is a 471-residue protein sequence, read N- to C-terminus: Secretogranin-3 (471 aa).

Residues 1–22 form the signal peptide; the sequence is MGFLWTGTWIVVLMLHSSPIQA. Disordered stretches follow at residues 23–72 and 86–105; these read FPKP…ESNY and EKEKNEKERQSVKISPNDNK. Residues 32–45 are compositionally biased toward basic and acidic residues; that stretch reads KPLHNRELSAERPL. Serine 40 bears the Phosphoserine mark. A glycan (O-linked (Xyl...) (chondroitin sulfate) serine) is linked at serine 40. A glycan (N-linked (GlcNAc...) asparagine) is linked at asparagine 71. Basic and acidic residues predominate over residues 86 to 96; it reads EKEKNEKERQS. Asparagine 353 carries N-linked (GlcNAc...) asparagine glycosylation. A disordered region spans residues 357 to 409; that stretch reads LFAVPSEKSHEETDSTKEEAAKMEKEYGTLKDSTKDDDSNPRGKTDEHKGKTE. Residues 363-409 are compositionally biased toward basic and acidic residues; that stretch reads EKSHEETDSTKEEAAKMEKEYGTLKDSTKDDDSNPRGKTDEHKGKTE. Serine 365 is modified (phosphoserine).

In terms of assembly, interacts with CHGA. Interacts with secretogranin II/SCG2. Interacts (via C-terminus) with CPE.

The protein resides in the cytoplasmic vesicle. It is found in the secretory vesicle. It localises to the secretory vesicle membrane. Its subcellular location is the secreted. Member of the granin protein family that regulates the biogenesis of secretory granules. Acts as a sorting receptor for intragranular proteins including chromogranin A/CHGA. May also play a role in angiogenesis. Promotes endothelial proliferation, migration and tube formation through MEK/ERK signaling pathway. The polypeptide is Secretogranin-3 (SCG3) (Bos taurus (Bovine)).